Reading from the N-terminus, the 123-residue chain is Large ribosomal subunit protein uL14 (123 aa).

The protein belongs to the universal ribosomal protein uL14 family. Part of the 50S ribosomal subunit. Forms a cluster with proteins L3 and L19. In the 70S ribosome, L14 and L19 interact and together make contacts with the 16S rRNA in bridges B5 and B8.

Functionally, binds to 23S rRNA. Forms part of two intersubunit bridges in the 70S ribosome. This is Large ribosomal subunit protein uL14 from Buchnera aphidicola subsp. Acyrthosiphon kondoi (Acyrthosiphon kondoi symbiotic bacterium).